Reading from the N-terminus, the 341-residue chain is Anthranilate phosphoribosyltransferase (341 aa).

5-phospho-alpha-D-ribose 1-diphosphate-binding positions include Gly79, 82–83 (GD), Thr87, 89–92 (NIST), 107–115 (KHGNRAASS), and Ala119. Gly79 provides a ligand contact to anthranilate. Ser91 lines the Mg(2+) pocket. Anthranilate is bound at residue Asn110. Anthranilate is bound at residue Arg165. 2 residues coordinate Mg(2+): Asp224 and Glu225.

It belongs to the anthranilate phosphoribosyltransferase family. In terms of assembly, homodimer. The cofactor is Mg(2+).

The enzyme catalyses N-(5-phospho-beta-D-ribosyl)anthranilate + diphosphate = 5-phospho-alpha-D-ribose 1-diphosphate + anthranilate. It participates in amino-acid biosynthesis; L-tryptophan biosynthesis; L-tryptophan from chorismate: step 2/5. In terms of biological role, catalyzes the transfer of the phosphoribosyl group of 5-phosphorylribose-1-pyrophosphate (PRPP) to anthranilate to yield N-(5'-phosphoribosyl)-anthranilate (PRA). The sequence is that of Anthranilate phosphoribosyltransferase from Lacticaseibacillus casei (strain BL23) (Lactobacillus casei).